The chain runs to 276 residues: Large ribosomal subunit protein uL2cy (276 aa).

2 disordered regions span residues 1–25 and 225–276; these read MAIHLYKTSTPSTRNGTVDSQVKSN and MNPV…RRSK. A compositionally biased stretch (polar residues) spans 7–25; it reads KTSTPSTRNGTVDSQVKSN.

It belongs to the universal ribosomal protein uL2 family. Part of the 50S ribosomal subunit.

It localises to the plastid. The protein resides in the chloroplast. The protein is Large ribosomal subunit protein uL2cy (rpl2-B) of Coffea arabica (Arabian coffee).